Reading from the N-terminus, the 288-residue chain is Short chain aldehyde dehydrogenase 1 (288 aa).

Residues 26–28, Asp47, 72–73, and 99–101 each bind NAD(+); these read SGI, DV, and NAG. The active-site Proton donor is the Ser153. Substrate contacts are provided by Ser153 and Tyr166. NAD(+) contacts are provided by Tyr166, Lys170, and Thr201. Tyr166 functions as the Proton acceptor in the catalytic mechanism. Lys170 serves as the catalytic Proton donor/acceptor.

This sequence belongs to the short-chain dehydrogenases/reductases (SDR) family. In terms of assembly, homodimer. Expressed in mature seeds.

It carries out the reaction 4,5,8-trihydroxycasbene + 2 NAD(+) = jolkinol C + 2 NADH + 2 H(+). It catalyses the reaction a secondary alcohol + NAD(+) = a ketone + NADH + H(+). The enzyme catalyses a primary alcohol + NAD(+) = an aldehyde + NADH + H(+). It participates in secondary metabolite biosynthesis; terpenoid biosynthesis. Involved in the biosynthesis of macrocyclic lathyrane type diterpenoids (also called Euphorbia factors) natural products, including the cyclization route from casbene to jolkinol C, a precursor for ingenol mebutate that is used to treat actinic keratosis, a precancerous skin condition. Catalyzes the conversion of 4,5,8-trihydroxycasbene into jolkinol C in presence of NAD. Also mediates the formation of casbene dione derivative and 4-ketocasbene from 4-hydroxy-8-ketocasbene and 4-hydroxycasbene, respectively. Together with CYP71D445, triggers the biosynthesis of 8-ketocasbene from 8-hydroxycasbene. In Euphorbia lathyris (Caper spurge), this protein is Short chain aldehyde dehydrogenase 1.